Here is a 263-residue protein sequence, read N- to C-terminus: 3-methyl-2-oxobutanoate hydroxymethyltransferase (263 aa).

Mg(2+) is bound by residues Asp-45 and Asp-84. 3-methyl-2-oxobutanoate-binding positions include 45–46 (DS), Asp-84, and Lys-112. Mg(2+) is bound at residue Glu-114. The active-site Proton acceptor is the Glu-180.

It belongs to the PanB family. In terms of assembly, homodecamer; pentamer of dimers. Requires Mg(2+) as cofactor.

The protein resides in the cytoplasm. The enzyme catalyses 3-methyl-2-oxobutanoate + (6R)-5,10-methylene-5,6,7,8-tetrahydrofolate + H2O = 2-dehydropantoate + (6S)-5,6,7,8-tetrahydrofolate. It functions in the pathway cofactor biosynthesis; (R)-pantothenate biosynthesis; (R)-pantoate from 3-methyl-2-oxobutanoate: step 1/2. Functionally, catalyzes the reversible reaction in which hydroxymethyl group from 5,10-methylenetetrahydrofolate is transferred onto alpha-ketoisovalerate to form ketopantoate. The protein is 3-methyl-2-oxobutanoate hydroxymethyltransferase of Salmonella arizonae (strain ATCC BAA-731 / CDC346-86 / RSK2980).